The primary structure comprises 146 residues: Interleukin-3 (146 aa).

An N-terminal signal peptide occupies residues 1-17; it reads MSSLSILHLLLLLLSLH. N-linked (GlcNAc...) asparagine glycosylation occurs at Asn-65.

The protein belongs to the IL-3 family. Monomer. Activated T-cells, mast cells, natural killer cells.

The protein localises to the secreted. Functionally, granulocyte/macrophage colony-stimulating factors are cytokines that act in hematopoiesis by controlling the production, differentiation, and function of 2 related white cell populations of the blood, the granulocytes and the monocytes-macrophages. In terms of biological role, this CSF induces granulocytes, macrophages, mast cells, stem cells, erythroid cells, eosinophils and megakaryocytes. This is Interleukin-3 (IL3) from Ovis aries (Sheep).